A 513-amino-acid chain; its full sequence is NAD(P)H-quinone oxidoreductase subunit 2 (513 aa).

The next 14 helical transmembrane spans lie at 12–32, 41–61, 77–97, 104–124, 130–150, 165–185, 199–219, 238–258, 272–292, 300–320, 328–348, 372–392, 394–414, and 456–476; these read TLWP…VDLI, LPYL…PMWI, LSVV…LMSV, SLAT…AMLL, MAMI…LSGY, LLIG…LYGF, IVNL…GICF, PTPV…ALAI, WQTL…VVAI, MLAY…AIGT, ILYI…VVLF, LVLS…GFFG, LYLF…FGLV, and AGML…PPLI. The segment covering 494 to 505 has biased composition (polar residues); sequence TATPVSRVSTGA. Residues 494-513 are disordered; sequence TATPVSRVSTGAQAPADHGR.

The protein belongs to the complex I subunit 2 family. NDH-1 can be composed of about 15 different subunits; different subcomplexes with different compositions have been identified which probably have different functions.

It is found in the cell inner membrane. The enzyme catalyses a plastoquinone + NADH + (n+1) H(+)(in) = a plastoquinol + NAD(+) + n H(+)(out). The catalysed reaction is a plastoquinone + NADPH + (n+1) H(+)(in) = a plastoquinol + NADP(+) + n H(+)(out). NDH-1 shuttles electrons from an unknown electron donor, via FMN and iron-sulfur (Fe-S) centers, to quinones in the respiratory and/or the photosynthetic chain. The immediate electron acceptor for the enzyme in this species is believed to be plastoquinone. Couples the redox reaction to proton translocation, and thus conserves the redox energy in a proton gradient. Cyanobacterial NDH-1 also plays a role in inorganic carbon-concentration. The polypeptide is NAD(P)H-quinone oxidoreductase subunit 2 (Gloeobacter violaceus (strain ATCC 29082 / PCC 7421)).